We begin with the raw amino-acid sequence, 590 residues long: UvrABC system protein C (590 aa).

Positions 14-91 (DQPGCYLMKD…IKKYDPKYNV (78 aa)) constitute a GIY-YIG domain. The region spanning 196–231 (NEVKKELEAKMLEASENLQFERAKEFRDQIAHIEST) is the UVR domain.

The protein belongs to the UvrC family. In terms of assembly, interacts with UvrB in an incision complex.

The protein resides in the cytoplasm. Its function is as follows. The UvrABC repair system catalyzes the recognition and processing of DNA lesions. UvrC both incises the 5' and 3' sides of the lesion. The N-terminal half is responsible for the 3' incision and the C-terminal half is responsible for the 5' incision. This chain is UvrABC system protein C, found in Bacillus licheniformis (strain ATCC 14580 / DSM 13 / JCM 2505 / CCUG 7422 / NBRC 12200 / NCIMB 9375 / NCTC 10341 / NRRL NRS-1264 / Gibson 46).